Reading from the N-terminus, the 224-residue chain is Large ribosomal subunit protein uL16z (224 aa).

It belongs to the universal ribosomal protein uL16 family. As to quaternary structure, component of the small ribosomal subunit. Mature ribosomes consist of a small (40S) and a large (60S) subunit. The 40S subunit contains about 33 different proteins and 1 molecule of RNA (18S). The 60S subunit contains about 49 different proteins and 3 molecules of RNA (25S, 5.8S and 5S).

The chain is Large ribosomal subunit protein uL16z (SC34) from Oryza sativa subsp. indica (Rice).